Consider the following 121-residue polypeptide: Large ribosomal subunit protein uL14 (121 aa).

This sequence belongs to the universal ribosomal protein uL14 family. Part of the 50S ribosomal subunit. Forms a cluster with proteins L3 and L19. In the 70S ribosome, L14 and L19 interact and together make contacts with the 16S rRNA in bridges B5 and B8.

Binds to 23S rRNA. Forms part of two intersubunit bridges in the 70S ribosome. The chain is Large ribosomal subunit protein uL14 from Synechococcus sp. (strain CC9311).